A 338-amino-acid chain; its full sequence is Methionyl-tRNA formyltransferase (338 aa).

110 to 113 serves as a coordination point for (6S)-5,6,7,8-tetrahydrofolate; it reads SLLP.

Belongs to the Fmt family.

The catalysed reaction is L-methionyl-tRNA(fMet) + (6R)-10-formyltetrahydrofolate = N-formyl-L-methionyl-tRNA(fMet) + (6S)-5,6,7,8-tetrahydrofolate + H(+). Attaches a formyl group to the free amino group of methionyl-tRNA(fMet). The formyl group appears to play a dual role in the initiator identity of N-formylmethionyl-tRNA by promoting its recognition by IF2 and preventing the misappropriation of this tRNA by the elongation apparatus. This chain is Methionyl-tRNA formyltransferase, found in Parasynechococcus marenigrum (strain WH8102).